A 311-amino-acid chain; its full sequence is Pyrimidine-specific ribonucleoside hydrolase RihA (311 aa).

The active site involves histidine 240.

The protein belongs to the IUNH family. RihA subfamily.

In terms of biological role, hydrolyzes with equal efficiency cytidine or uridine to ribose and cytosine or uracil, respectively. This is Pyrimidine-specific ribonucleoside hydrolase RihA from Escherichia coli O157:H7.